The following is a 469-amino-acid chain: UDP-N-acetylmuramate--L-alanine ligase (469 aa).

ATP is bound at residue G113–T119.

It belongs to the MurCDEF family.

The protein resides in the cytoplasm. The enzyme catalyses UDP-N-acetyl-alpha-D-muramate + L-alanine + ATP = UDP-N-acetyl-alpha-D-muramoyl-L-alanine + ADP + phosphate + H(+). The protein operates within cell wall biogenesis; peptidoglycan biosynthesis. Cell wall formation. This chain is UDP-N-acetylmuramate--L-alanine ligase, found in Neisseria meningitidis serogroup C / serotype 2a (strain ATCC 700532 / DSM 15464 / FAM18).